The sequence spans 260 residues: Acetylglutamate kinase (260 aa).

Substrate-binding positions include 46-47 (GG), Arg68, and Asn160.

The protein belongs to the acetylglutamate kinase family. ArgB subfamily.

It is found in the cytoplasm. The enzyme catalyses N-acetyl-L-glutamate + ATP = N-acetyl-L-glutamyl 5-phosphate + ADP. The protein operates within amino-acid biosynthesis; L-arginine biosynthesis; N(2)-acetyl-L-ornithine from L-glutamate: step 2/4. Functionally, catalyzes the ATP-dependent phosphorylation of N-acetyl-L-glutamate. The polypeptide is Acetylglutamate kinase (Shewanella sp. (strain MR-4)).